We begin with the raw amino-acid sequence, 537 residues long: Tyrosine-protein kinase Fyn (537 aa).

A lipid anchor (N-myristoyl glycine) is attached at G2. S-palmitoyl cysteine attachment occurs at residues C3 and C6. T12 carries the phosphothreonine; by PKC modification. Residues S21 and S26 each carry the phosphoserine modification. Positions 82–143 (TGVTLFVALY…PSNYVAPVDS (62 aa)) constitute an SH3 domain. The SH2 domain occupies 149–246 (WYFGKLGRKD…GLCCRLVVPC (98 aa)). Y185 carries the phosphotyrosine modification. The region spanning 271-524 (LQLIKRLGNG…YLQGFLEDYF (254 aa)) is the Protein kinase domain. ATP contacts are provided by residues 277 to 285 (LGNGQFGEV) and K299. The active-site Proton acceptor is D390. The residue at position 420 (Y420) is a Phosphotyrosine; by autocatalysis. Y531 is modified (phosphotyrosine; by CSK).

It belongs to the protein kinase superfamily. Tyr protein kinase family. SRC subfamily. Interacts (via its SH3 domain) with PIK3R1 and PRMT8. Interacts with FYB1, PAG1, and SH2D1A. Interacts with CD79A (tyrosine-phosphorylated form); the interaction increases FYN activity. Interacts (via SH2 domain) with CSF1R (tyrosine phosphorylated). Interacts with TOM1L1 (phosphorylated form). Interacts with KDR (tyrosine phosphorylated). Interacts (via SH3 domain) with KLHL2 (via N-terminus). Interacts with SH2D1A and SLAMF1. Interacts with ITCH; the interaction phosphorylates ITCH and negatively regulates its activity. Interacts with FASLG. Interacts with RUNX3. Interacts with KIT. Interacts with EPHA8; possible downstream effector of EPHA8 in regulation of cell adhesion. Interacts with PTK2/FAK1; this interaction leads to PTK2/FAK1 phosphorylation and activation. Interacts with CAV1; this interaction couples integrins to the Ras-ERK pathway. Interacts with UNC119. Interacts (via SH2 domain) with PTPRH (phosphorylated form). Interacts with PTPRO (phosphorylated form). Interacts with PTPRB (phosphorylated form). Interacts with FYB2. Interacts with DSCAM. Interacts with SKAP1 and FYB1; this interaction promotes the phosphorylation of CLNK. Interacts with NEDD9; in the presence of PTK2. Mn(2+) is required as a cofactor. Post-translationally, autophosphorylated at Tyr-420. Phosphorylation on the C-terminal tail at Tyr-531 by CSK maintains the enzyme in an inactive state. PTPRC/CD45 dephosphorylates Tyr-531 leading to activation. Ultraviolet B (UVB) strongly increase phosphorylation at Thr-12 and kinase activity, and promotes translocation from the cytoplasm to the nucleus. Dephosphorylation at Tyr-420 by PTPN2 negatively regulates T-cell receptor signaling. Phosphorylated at tyrosine residues, which can be enhanced by NTN1. Palmitoylated. Palmitoylation at Cys-3 and Cys-6, probably by ZDHHC21, regulates subcellular location.

Its subcellular location is the cytoplasm. It is found in the nucleus. The protein resides in the cell membrane. The protein localises to the perikaryon. It carries out the reaction L-tyrosyl-[protein] + ATP = O-phospho-L-tyrosyl-[protein] + ADP + H(+). Inhibited by phosphorylation of Tyr-531 by leukocyte common antigen and activated by dephosphorylation of this site. Functionally, non-receptor tyrosine-protein kinase that plays a role in many biological processes including regulation of cell growth and survival, cell adhesion, integrin-mediated signaling, cytoskeletal remodeling, cell motility, immune response and axon guidance. Inactive FYN is phosphorylated on its C-terminal tail within the catalytic domain. Following activation by PKA, the protein subsequently associates with PTK2/FAK1, allowing PTK2/FAK1 phosphorylation, activation and targeting to focal adhesions. Involved in the regulation of cell adhesion and motility through phosphorylation of CTNNB1 (beta-catenin) and CTNND1 (delta-catenin). Regulates cytoskeletal remodeling by phosphorylating several proteins including the actin regulator WAS and the microtubule-associated proteins MAP2 and MAPT. Promotes cell survival by phosphorylating AGAP2/PIKE-A and preventing its apoptotic cleavage. Participates in signal transduction pathways that regulate the integrity of the glomerular slit diaphragm (an essential part of the glomerular filter of the kidney) by phosphorylating several slit diaphragm components including NPHS1, KIRREL1 and TRPC6. Plays a role in neural processes by phosphorylating DPYSL2, a multifunctional adapter protein within the central nervous system, ARHGAP32, a regulator for Rho family GTPases implicated in various neural functions, and SNCA, a small pre-synaptic protein. Involved in reelin signaling by mediating phosphorylation of DAB1 following reelin (RELN)-binding to its receptor. Participates in the downstream signaling pathways that lead to T-cell differentiation and proliferation following T-cell receptor (TCR) stimulation. Phosphorylates PTK2B/PYK2 in response to T-cell receptor activation. Also participates in negative feedback regulation of TCR signaling through phosphorylation of PAG1, thereby promoting interaction between PAG1 and CSK and recruitment of CSK to lipid rafts. CSK maintains LCK and FYN in an inactive form. Promotes CD28-induced phosphorylation of VAV1. In mast cells, phosphorylates CLNK after activation of immunoglobulin epsilon receptor signaling. Can also promote CD244-mediated NK cell activation. The chain is Tyrosine-protein kinase Fyn from Sus scrofa (Pig).